Here is a 149-residue protein sequence, read N- to C-terminus: Calmodulin (149 aa).

N-acetylalanine is present on Ala2. EF-hand domains follow at residues 8-43 (EQIA…LGQN), 44-79 (PTEA…KMKD), 81-116 (DSEE…LGEK), and 117-149 (LTDE…MLAK). The Ca(2+) site is built by Asp21, Asp23, Asp25, Cys27, Glu32, Asp57, Asp59, Asn61, Thr63, Glu68, Asp94, Asp96, Asn98, and Glu105. Lys116 bears the N6,N6,N6-trimethyllysine mark. Ca(2+) contacts are provided by Asp130, Asp132, Asp134, Gln136, and Glu141.

It belongs to the calmodulin family.

Functionally, calmodulin mediates the control of a large number of enzymes, ion channels and other proteins by Ca(2+). Among the enzymes to be stimulated by the calmodulin-Ca(2+) complex are a number of protein kinases and phosphatases. The protein is Calmodulin (CALM1) of Solanum lycopersicum (Tomato).